Reading from the N-terminus, the 491-residue chain is Probable glycine dehydrogenase (decarboxylating) subunit 2 (491 aa).

Lys264 carries the N6-(pyridoxal phosphate)lysine modification.

The protein belongs to the GcvP family. C-terminal subunit subfamily. As to quaternary structure, the glycine cleavage system is composed of four proteins: P, T, L and H. In this organism, the P 'protein' is a heterodimer of two subunits. Requires pyridoxal 5'-phosphate as cofactor.

The enzyme catalyses N(6)-[(R)-lipoyl]-L-lysyl-[glycine-cleavage complex H protein] + glycine + H(+) = N(6)-[(R)-S(8)-aminomethyldihydrolipoyl]-L-lysyl-[glycine-cleavage complex H protein] + CO2. Its function is as follows. The glycine cleavage system catalyzes the degradation of glycine. The P protein binds the alpha-amino group of glycine through its pyridoxal phosphate cofactor; CO(2) is released and the remaining methylamine moiety is then transferred to the lipoamide cofactor of the H protein. This is Probable glycine dehydrogenase (decarboxylating) subunit 2 from Coxiella burnetii (strain CbuG_Q212) (Coxiella burnetii (strain Q212)).